We begin with the raw amino-acid sequence, 209 residues long: Large ribosomal subunit protein uL3 (209 aa).

Residue Q150 is modified to N5-methylglutamine.

The protein belongs to the universal ribosomal protein uL3 family. As to quaternary structure, part of the 50S ribosomal subunit. Forms a cluster with proteins L14 and L19. Post-translationally, methylated by PrmB.

Its function is as follows. One of the primary rRNA binding proteins, it binds directly near the 3'-end of the 23S rRNA, where it nucleates assembly of the 50S subunit. In Buchnera aphidicola subsp. Schizaphis graminum (strain Sg), this protein is Large ribosomal subunit protein uL3.